The chain runs to 258 residues: Proliferating cell nuclear antigen (258 aa).

Residues 61 to 80 mediate DNA binding; it reads RCDHPVTLGMDLTSLSKILR. Lysine 127 is covalently cross-linked (Glycyl lysine isopeptide (Lys-Gly) (interchain with G-Cter in SUMO)). Residue lysine 164 forms a Glycyl lysine isopeptide (Lys-Gly) (interchain with G-Cter in SUMO); alternate linkage. A Glycyl lysine isopeptide (Lys-Gly) (interchain with G-Cter in ubiquitin); alternate cross-link involves residue lysine 164.

Belongs to the PCNA family. Homotrimer. Interacts with RAD30. Interacts with MCM10. Interacts with UBP10. Sumoylated on Lys-164, and to a lesser extent on Lys-127 by the UBC9/SIZ1 complex during S-phase; which impairs ubiquitination and function in DNA repair. In terms of processing, monoubiquitinated on Lys-164 by the UBC2/RAD18 complex upon DNA damage, and then polyubiquitinated through 'Lys-63'-linkage by UBC13/MMS2. Ubiquitination is required for UBC2-mediated DNA repair. Post-translationally, lys-164 is deubiquitinated by UBP10.

It localises to the nucleus. Its function is as follows. This protein is an auxiliary protein of DNA polymerase delta and is involved in the control of eukaryotic DNA replication by increasing the polymerase's processibility during elongation of the leading strand. Involved in DNA repair. The sequence is that of Proliferating cell nuclear antigen (POL30) from Saccharomyces cerevisiae (strain ATCC 204508 / S288c) (Baker's yeast).